Consider the following 217-residue polypeptide: Adenylate kinase (217 aa).

Residue 10 to 15 coordinates ATP; that stretch reads GAGKGT. An NMP region spans residues 30-59; it reads STGDIFRSNIKNGTELGRKAKEYIDKGLLV. Residues Thr31, Arg36, 57–59, 85–88, and Gln92 contribute to the AMP site; these read LLV and GFPR. The tract at residues 126–163 is LID; it reads GRRVCSKCGMSYHIVYNQPKVENICDSCNGELIQRDDD. Arg127 contributes to the ATP binding site. 2 residues coordinate Zn(2+): Cys130 and Cys133. Position 136-137 (136-137) interacts with ATP; the sequence is SY. Positions 150 and 153 each coordinate Zn(2+). The AMP site is built by Arg160 and Arg171. Residue Glu199 participates in ATP binding.

Belongs to the adenylate kinase family. In terms of assembly, monomer.

The protein localises to the cytoplasm. The enzyme catalyses AMP + ATP = 2 ADP. Its pathway is purine metabolism; AMP biosynthesis via salvage pathway; AMP from ADP: step 1/1. Its function is as follows. Catalyzes the reversible transfer of the terminal phosphate group between ATP and AMP. Plays an important role in cellular energy homeostasis and in adenine nucleotide metabolism. This is Adenylate kinase from Acetivibrio thermocellus (strain ATCC 27405 / DSM 1237 / JCM 9322 / NBRC 103400 / NCIMB 10682 / NRRL B-4536 / VPI 7372) (Clostridium thermocellum).